We begin with the raw amino-acid sequence, 208 residues long: Uracil phosphoribosyltransferase (208 aa).

5-phospho-alpha-D-ribose 1-diphosphate is bound by residues R78, R103, and 130–138 (DPMLATGGT). Residues I193 and 198-200 (GDA) each bind uracil. D199 serves as a coordination point for 5-phospho-alpha-D-ribose 1-diphosphate.

This sequence belongs to the UPRTase family. Requires Mg(2+) as cofactor.

The enzyme catalyses UMP + diphosphate = 5-phospho-alpha-D-ribose 1-diphosphate + uracil. Its pathway is pyrimidine metabolism; UMP biosynthesis via salvage pathway; UMP from uracil: step 1/1. Its activity is regulated as follows. Allosterically activated by GTP. Its function is as follows. Catalyzes the conversion of uracil and 5-phospho-alpha-D-ribose 1-diphosphate (PRPP) to UMP and diphosphate. The protein is Uracil phosphoribosyltransferase of Blochmanniella floridana.